Consider the following 286-residue polypeptide: MVAVIIKGNEVAEKKRAQLKEEVVKLKEQGIVPGLAVILVGEDPASRSYVKGKEKGCEQVGIYSELIEFPETITEERLLAEIDRLNGDDRINGILVQLPLPKHIEEKAIIERISPEKDVDGFHPISVGRMMTGQDTFLPCTPHGIVELVKETNLDISGKHVVVIGRSNIVGKPVGQLFLNENATVTYCHSKTQNMKELTKLADILIVAVGRPKMVTADYIKEGAVVIDVGVNRLETGKLCGDVDFDNVLDVAGYITPVPKGVGPMTITMLLHNTVESAKRAGVVCK.

Residues 165–167, serine 190, and valine 231 contribute to the NADP(+) site; that span reads GRS.

Belongs to the tetrahydrofolate dehydrogenase/cyclohydrolase family. Homodimer.

It carries out the reaction (6R)-5,10-methylene-5,6,7,8-tetrahydrofolate + NADP(+) = (6R)-5,10-methenyltetrahydrofolate + NADPH. The enzyme catalyses (6R)-5,10-methenyltetrahydrofolate + H2O = (6R)-10-formyltetrahydrofolate + H(+). Its pathway is one-carbon metabolism; tetrahydrofolate interconversion. In terms of biological role, catalyzes the oxidation of 5,10-methylenetetrahydrofolate to 5,10-methenyltetrahydrofolate and then the hydrolysis of 5,10-methenyltetrahydrofolate to 10-formyltetrahydrofolate. The protein is Bifunctional protein FolD of Bacillus thuringiensis (strain Al Hakam).